A 370-amino-acid polypeptide reads, in one-letter code: Forkhead box protein J1.2 (370 aa).

The interval 45-74 is disordered; the sequence is ANSRPPVPRVSQGPCSPPAGDTASCQAPRT. A DNA-binding region (fork-head) is located at residues 108–202; it reads KPPYSYATLI…VNGVLKRRRM (95 aa). Residues 227–246 are disordered; the sequence is PGSHHMQHISGGHRQSRRYE.

Belongs to the FOXJ1 family.

Its subcellular location is the nucleus. Key transcription factor required for motile ciliogenesis. Activates genes essential for motile cilia formation and function. This chain is Forkhead box protein J1.2, found in Xenopus laevis (African clawed frog).